Reading from the N-terminus, the 594-residue chain is uncharacterized protein (594 aa).

The zn(2)-C6 fungal-type DNA-binding region spans 11–38 (CELCRRKKIRCNRELPSCQNCIVYQEEC). A helical membrane pass occupies residues 503-523 (YLWVFLYCPFTPFLVLFSNIV).

The protein localises to the nucleus. Its subcellular location is the membrane. This is an uncharacterized protein from Schizosaccharomyces pombe (strain 972 / ATCC 24843) (Fission yeast).